Here is a 142-residue protein sequence, read N- to C-terminus: Interleukin-3 (142 aa).

The signal sequence occupies residues 1 to 18; it reads MSHLPILLLLLLVSPGLQ. Asparagine 33 is a glycosylation site (N-linked (GlcNAc...) asparagine). The cysteines at positions 34 and 102 are disulfide-linked.

It belongs to the IL-3 family. As to quaternary structure, monomer. As to expression, activated T-cells, mast cells, natural killer cells.

Its subcellular location is the secreted. Granulocyte/macrophage colony-stimulating factors are cytokines that act in hematopoiesis by controlling the production, differentiation, and function of 2 related white cell populations of the blood, the granulocytes and the monocytes-macrophages. Functionally, this CSF induces granulocytes, macrophages, mast cells, stem cells, erythroid cells, eosinophils and megakaryocytes. The polypeptide is Interleukin-3 (IL3) (Callithrix jacchus (White-tufted-ear marmoset)).